The following is a 241-amino-acid chain: tRNA (guanine-N(7)-)-methyltransferase (241 aa).

A compositionally biased stretch (polar residues) spans 1-10 (MTESNETPNT). The disordered stretch occupies residues 1–21 (MTESNETPNTPEAGDESKHRR). Residues glutamate 71, glutamate 96, aspartate 123, and aspartate 146 each coordinate S-adenosyl-L-methionine. Aspartate 146 is an active-site residue. Residues lysine 150, aspartate 182, and 219-222 (TKFE) each bind substrate.

The protein belongs to the class I-like SAM-binding methyltransferase superfamily. TrmB family.

The enzyme catalyses guanosine(46) in tRNA + S-adenosyl-L-methionine = N(7)-methylguanosine(46) in tRNA + S-adenosyl-L-homocysteine. It participates in tRNA modification; N(7)-methylguanine-tRNA biosynthesis. In terms of biological role, catalyzes the formation of N(7)-methylguanine at position 46 (m7G46) in tRNA. This Pseudomonas fluorescens (strain SBW25) protein is tRNA (guanine-N(7)-)-methyltransferase.